The chain runs to 665 residues: MESTTLSKPFKNQVNPWGPLIVLLILGRVNPVALGNSPHQVFNLSWEVTNEDRETVWAITGNHPLWTWWPDLTPDLCMLALHGPSYWGLEYQAPFSPPPGPPCCSGSSGSTPGCSRDCEEPLTSYTPRCNTAWNRLKLSKVTHAHNEGFYVCPGPHRPRWARSCGGPESFYCASWGCETTGRASWKPSSSWDYITVSNNLTSGQATPVCKNNTWCNSLTIRFTSLGKQATSWVTGHWWGLRLYVSGHDPGLIFGIRLKITDSGPRVPIGPNPVLSDQRPPSQPRSPPHSNSTPTETPLTLPEPPPAGVENRLLNLVKGAYQALNLTSPDRTQECWLCLVSGPPYYEGVAVLGTYSNHTSAPANCSVALQHKLTLSEVTGQGLCVGAVPKTHQALCNTTQNTSGGSYYLAAPAGTIWACNTGLTPCLSTTVLNLTTDYCVLVELWPRVTYHSPSYVYHQFERRGKYKREPVSLTLALLLGGLTMGGIAAGIGTGTTALVATQQLQAAVHDDLKEVEKSITNLEKSLTSLSEVVLQNRRGLDLLFLKEGGLCAALKEECCFYADHTGVVRDSMAKLRERLNQRQKLFESGQGWFERLFNGSPWFTTLISTIMGPLIVLLLILLLGPCILNRLVQFVKDRISVVQALVLTQQYHQLKSIDPEEMESRE.

The signal sequence occupies residues 1–31; that stretch reads MESTTLSKPFKNQVNPWGPLIVLLILGRVNP. Residues 32-267 are receptor-binding domain (RBD); the sequence is VALGNSPHQV…KITDSGPRVP (236 aa). Topologically, residues 32–605 are extracellular; the sequence is VALGNSPHQV…FNGSPWFTTL (574 aa). N-linked (GlcNAc...) asparagine; by host glycosylation is present at Asn43. 5 cysteine pairs are disulfide-bonded: Cys77–Cys129, Cys103–Cys118, Cys104–Cys114, Cys152–Cys172, and Cys164–Cys177. Asp117 is a Zn(2+) binding site. N-linked (GlcNAc...) asparagine; by host glycans are attached at residues Asn199 and Asn211. Cys209 and Cys215 are joined by a disulfide. The interval 266-307 is disordered; it reads VPIGPNPVLSDQRPPSQPRSPPHSNSTPTETPLTLPEPPPAG. Asn324 carries an N-linked (GlcNAc...) asparagine; by host glycan. Cystine bridges form between Cys334/Cys337, Cys334/Cys558, Cys364/Cys418, Cys383/Cys395, Cys425/Cys438, and Cys550/Cys557. The CXXC motif lies at 334-337; sequence CWLC. 2 N-linked (GlcNAc...) asparagine; by host glycosylation sites follow: Asn356 and Asn363. Asn396, Asn400, and Asn432 each carry an N-linked (GlcNAc...) asparagine; by host glycan. Residues 470–490 are fusion peptide; it reads VSLTLALLLGGLTMGGIAAGI. Residues 505 to 532 adopt a coiled-coil conformation; sequence AAVHDDLKEVEKSITNLEKSLTSLSEVV. The segment at 533 to 549 is immunosuppression; sequence LQNRRGLDLLFLKEGGL. The short motif at 550–558 is the CX6CC element; the sequence is CAALKEECC. The chain crosses the membrane as a helical span at residues 606–626; that stretch reads ISTIMGPLIVLLLILLLGPCI. Cys625 carries the S-palmitoyl cysteine; by host lipid modification. Topologically, residues 627 to 665 are cytoplasmic; that stretch reads LNRLVQFVKDRISVVQALVLTQQYHQLKSIDPEEMESRE. The short motif at 650-653 is the YXXL motif; contains endocytosis signal element; that stretch reads YHQL.

As to quaternary structure, the mature envelope protein (Env) consists of a trimer of SU-TM heterodimers attached by a labile interchain disulfide bond. In terms of processing, specific enzymatic cleavages in vivo yield mature proteins. Envelope glycoproteins are synthesized as an inactive precursor that is N-glycosylated and processed likely by host cell furin or by a furin-like protease in the Golgi to yield the mature SU and TM proteins. The cleavage site between SU and TM requires the minimal sequence [KR]-X-[KR]-R. The R-peptide is released from the C-terminus of the cytoplasmic tail of the TM protein upon particle formation as a result of proteolytic cleavage by the viral protease. Cleavage of this peptide is required for TM to become fusogenic. The CXXC motif is highly conserved across a broad range of retroviral envelope proteins. It is thought to participate in the formation of a labile disulfide bond possibly with the CX6CC motif present in the transmembrane protein. Isomerization of the intersubunit disulfide bond to an SU intrachain disulfide bond is thought to occur upon receptor recognition in order to allow membrane fusion. Post-translationally, the transmembrane protein is palmitoylated. In terms of processing, the R-peptide is palmitoylated.

Its subcellular location is the virion membrane. The protein resides in the host cell membrane. In terms of biological role, the surface protein (SU) attaches the virus to the host cell by binding to its receptor. This interaction triggers the refolding of the transmembrane protein (TM) and is thought to activate its fusogenic potential by unmasking its fusion peptide. Fusion occurs at the host cell plasma membrane. Functionally, the transmembrane protein (TM) acts as a class I viral fusion protein. Under the current model, the protein has at least 3 conformational states: pre-fusion native state, pre-hairpin intermediate state, and post-fusion hairpin state. During viral and target cell membrane fusion, the coiled coil regions (heptad repeats) assume a trimer-of-hairpins structure, positioning the fusion peptide in close proximity to the C-terminal region of the ectodomain. The formation of this structure appears to drive apposition and subsequent fusion of viral and target cell membranes. Membranes fusion leads to delivery of the nucleocapsid into the cytoplasm. This Radiation murine leukemia virus protein is Envelope glycoprotein (env).